The sequence spans 171 residues: 3-hydroxydecanoyl-[acyl-carrier-protein] dehydratase (171 aa).

Residue H70 is part of the active site.

The protein belongs to the thioester dehydratase family. FabA subfamily. Homodimer.

It is found in the cytoplasm. It catalyses the reaction a (3R)-hydroxyacyl-[ACP] = a (2E)-enoyl-[ACP] + H2O. It carries out the reaction (3R)-hydroxydecanoyl-[ACP] = (2E)-decenoyl-[ACP] + H2O. The catalysed reaction is (2E)-decenoyl-[ACP] = (3Z)-decenoyl-[ACP]. It participates in lipid metabolism; fatty acid biosynthesis. Functionally, necessary for the introduction of cis unsaturation into fatty acids. Catalyzes the dehydration of (3R)-3-hydroxydecanoyl-ACP to E-(2)-decenoyl-ACP and then its isomerization to Z-(3)-decenoyl-ACP. Can catalyze the dehydratase reaction for beta-hydroxyacyl-ACPs with saturated chain lengths up to 16:0, being most active on intermediate chain length. The chain is 3-hydroxydecanoyl-[acyl-carrier-protein] dehydratase from Pseudomonas aeruginosa (strain LESB58).